Consider the following 431-residue polypeptide: Cyclin-B2-4 (431 aa).

Residues 1 to 30 form a disordered region; the sequence is MGGSDENRHGVIGPMNRQQGGLRGGKVIPT.

It belongs to the cyclin family. Cyclin AB subfamily. In terms of assembly, interacts with SMR11.

The sequence is that of Cyclin-B2-4 (CYCB2-4) from Arabidopsis thaliana (Mouse-ear cress).